Here is a 1510-residue protein sequence, read N- to C-terminus: Chromosome partition protein MukB (1510 aa).

A coiled-coil region spans residues 6–30 (ELENEIELESDEVIMENENVEEIVD). 75 to 82 (GGNGAGKS) serves as a coordination point for ATP. 7 coiled-coil regions span residues 346–506 (QHRL…HKMS), 553–611 (QQTP…EDIS), 673–706 (MQSQLVKERELTMQRDQLEQKRLQLDEQISRLSQ), 821–846 (SAAREKRLEELQIERDEVAEQHAQIA), 876–1064 (EALM…IQLQ), 1094–1149 (ERAR…RELV), and 1249–1304 (DAIE…LQNI). The interval 707 to 824 (PDGSEDPRLN…EIPLFGSAAR (118 aa)) is flexible hinge.

This sequence belongs to the SMC family. MukB subfamily. In terms of assembly, homodimerization via its hinge domain. Binds to DNA via its C-terminal region. Interacts, and probably forms a ternary complex, with MukE and MukF via its C-terminal region. The complex formation is stimulated by calcium or magnesium. Interacts with tubulin-related protein FtsZ.

The protein resides in the cytoplasm. Its subcellular location is the nucleoid. Its function is as follows. Plays a central role in chromosome condensation, segregation and cell cycle progression. Functions as a homodimer, which is essential for chromosome partition. Involved in negative DNA supercoiling in vivo, and by this means organize and compact chromosomes. May achieve or facilitate chromosome segregation by condensation DNA from both sides of a centrally located replisome during cell division. The protein is Chromosome partition protein MukB of Haemophilus influenzae (strain PittGG).